An 813-amino-acid chain; its full sequence is Leucine--tRNA ligase (813 aa).

The 'HIGH' region signature appears at 41 to 51 (PYPSGTLHMGH). Positions 575 to 579 (KMSKS) match the 'KMSKS' region motif. Position 578 (K578) interacts with ATP.

Belongs to the class-I aminoacyl-tRNA synthetase family.

The protein localises to the cytoplasm. It catalyses the reaction tRNA(Leu) + L-leucine + ATP = L-leucyl-tRNA(Leu) + AMP + diphosphate. The sequence is that of Leucine--tRNA ligase from Francisella tularensis subsp. tularensis (strain FSC 198).